A 113-amino-acid polypeptide reads, in one-letter code: Large ribosomal subunit protein uL22 (113 aa).

The protein belongs to the universal ribosomal protein uL22 family. As to quaternary structure, part of the 50S ribosomal subunit.

Its function is as follows. This protein binds specifically to 23S rRNA; its binding is stimulated by other ribosomal proteins, e.g. L4, L17, and L20. It is important during the early stages of 50S assembly. It makes multiple contacts with different domains of the 23S rRNA in the assembled 50S subunit and ribosome. Functionally, the globular domain of the protein is located near the polypeptide exit tunnel on the outside of the subunit, while an extended beta-hairpin is found that lines the wall of the exit tunnel in the center of the 70S ribosome. In Mycoplasmopsis synoviae (strain 53) (Mycoplasma synoviae), this protein is Large ribosomal subunit protein uL22.